We begin with the raw amino-acid sequence, 328 residues long: RING finger protein 175 (328 aa).

The next 5 helical transmembrane spans lie at 51 to 71 (MHVE…IVLV), 83 to 103 (LVTL…LYWW), 104 to 121 (RFLS…YILF), 149 to 169 (AFGV…NLFF), and 180 to 200 (GIVS…FAEI). The RING-type; atypical zinc finger occupies 227–277 (CAVCGQKIIVELDEEGLIENTYQLSCNHVFHEFCIRGWCIVGKKQTCPYCK).

It is found in the membrane. The polypeptide is RING finger protein 175 (RNF175) (Homo sapiens (Human)).